A 299-amino-acid polypeptide reads, in one-letter code: Leucine zipper transcription factor-like protein 1 (299 aa).

Residues 96-299 (LKLQTDISEL…KRLAKYESED (204 aa)) are a coiled coil. The interaction with BSS9 stretch occupies residues 145–299 (GTTELLNKEI…KRLAKYESED (155 aa)).

It belongs to the LZTFL1 family. Self-associates. Interacts with BBS9; the interaction mediates the association of LZTL1 with the BBsome complex and regulates BBSome ciliary trafficking. Highly expressed in testis. Expressed in brain, cerebellum, eye, heart, kidney, liver, lung and trachea. In small intestine, graded expression along the crypt-villus axis with high levels in the villus apex and lower levels in the crypt stem cells (at protein level). Not expressed in skeletal muscle and white adipose tissue.

It is found in the cytoplasm. Regulates ciliary localization of the BBSome complex. Together with the BBSome complex, controls SMO ciliary trafficking and contributes to the sonic hedgehog (SHH) pathway regulation. May play a role in neurite outgrowth. May have tumor suppressor function. This Mus musculus (Mouse) protein is Leucine zipper transcription factor-like protein 1 (Lztfl1).